Here is a 150-residue protein sequence, read N- to C-terminus: 3-hydroxyacyl-[acyl-carrier-protein] dehydratase FabZ (150 aa).

Histidine 52 is a catalytic residue.

This sequence belongs to the thioester dehydratase family. FabZ subfamily.

It is found in the cytoplasm. The catalysed reaction is a (3R)-hydroxyacyl-[ACP] = a (2E)-enoyl-[ACP] + H2O. Functionally, involved in unsaturated fatty acids biosynthesis. Catalyzes the dehydration of short chain beta-hydroxyacyl-ACPs and long chain saturated and unsaturated beta-hydroxyacyl-ACPs. The sequence is that of 3-hydroxyacyl-[acyl-carrier-protein] dehydratase FabZ from Albidiferax ferrireducens (strain ATCC BAA-621 / DSM 15236 / T118) (Rhodoferax ferrireducens).